The following is a 231-amino-acid chain: Uridylate cyclase (231 aa).

The Guanylate cyclase domain occupies 46–178 (TVLYADLDGS…RAANYAAKLT (133 aa)). Tyr49 contributes to the a ribonucleoside 5'-triphosphate binding site. Residues Asp51 and Asp95 each contribute to the Mn(2+) site. Arg96 contacts a ribonucleoside 5'-triphosphate.

This sequence belongs to the adenylyl cyclase class-4/guanylyl cyclase family. Pyrimidine cyclase subfamily. As to quaternary structure, homodimer. Mn(2+) serves as cofactor.

Its subcellular location is the cytoplasm. The catalysed reaction is UTP = 3',5'-cyclic UMP + diphosphate. Its function is as follows. Pycsar (pyrimidine cyclase system for antiphage resistance) provides immunity against bacteriophage. The pyrimidine cyclase (PycC) synthesizes cyclic nucleotides in response to infection; these serve as specific second messenger signals. The signal activates the adjacent effector, leading to bacterial cell death and abortive phage infection. A clade B Pycsar system. The pyrimidine cyclase gene of a two-gene Pycsar system, generates cyclic UMP (cUMP) from UTP probably in response to bacteriophage infection. Expression of this and adjacent effector XpPycTIR (AC P0DV29) confers resistance to bacteriophage T7. When cells expressing the Pycsar system are infected phage T7 at low multiplicity of infection (0.2 MOI) the culture survives, at 2.0 MOI bacteria enter growth arrest. The same cells enter growth arrest after exposure to 2.5 mM cUMP but not cCMP; the effector protein responds only to the cUMP produced by its cognate NTP cyclase. The chain is Uridylate cyclase from Xanthomonas perforans.